A 147-amino-acid polypeptide reads, in one-letter code: Large ribosomal subunit protein bL9 (147 aa).

It belongs to the bacterial ribosomal protein bL9 family.

Functionally, binds to the 23S rRNA. The chain is Large ribosomal subunit protein bL9 from Campylobacter jejuni subsp. doylei (strain ATCC BAA-1458 / RM4099 / 269.97).